Consider the following 388-residue polypeptide: Chorismate synthase (388 aa).

Arg-39 and Arg-45 together coordinate NADP(+). FMN-binding positions include 132–134, 251–252, Gly-296, 311–315, and Arg-337; these read RSS, NA, and KPIPT.

The protein belongs to the chorismate synthase family. Homotetramer. The cofactor is FMNH2.

It catalyses the reaction 5-O-(1-carboxyvinyl)-3-phosphoshikimate = chorismate + phosphate. Its pathway is metabolic intermediate biosynthesis; chorismate biosynthesis; chorismate from D-erythrose 4-phosphate and phosphoenolpyruvate: step 7/7. Functionally, catalyzes the anti-1,4-elimination of the C-3 phosphate and the C-6 proR hydrogen from 5-enolpyruvylshikimate-3-phosphate (EPSP) to yield chorismate, which is the branch point compound that serves as the starting substrate for the three terminal pathways of aromatic amino acid biosynthesis. This reaction introduces a second double bond into the aromatic ring system. The protein is Chorismate synthase of Staphylococcus aureus (strain MRSA252).